The following is a 306-amino-acid chain: Serine/threonine-protein kinase mug51 (306 aa).

It belongs to the STK19 family.

It carries out the reaction L-seryl-[protein] + ATP = O-phospho-L-seryl-[protein] + ADP + H(+). The enzyme catalyses L-threonyl-[protein] + ATP = O-phospho-L-threonyl-[protein] + ADP + H(+). Its function is as follows. Serine/threonine-protein kinase. Has a role in meiosis. The sequence is that of Serine/threonine-protein kinase mug51 (mug51) from Schizosaccharomyces pombe (strain 972 / ATCC 24843) (Fission yeast).